The following is a 176-amino-acid chain: Ferritin, middle subunit (176 aa).

The Ferritin-like diiron domain occupies 7 to 156 (QNYHRDCEAA…DFITNLSRMD (150 aa)). The Fe cation site is built by E24, E59, H62, E104, and Q138.

Belongs to the ferritin family. In terms of assembly, in liver, forms a heteromer consisting of middle and heavy subunits. In spleen, forms a homomer. The functional molecule forms a roughly spherical shell with a diameter of 12 nm and contains a central cavity into which the insoluble mineral iron core is deposited. Liver and spleen (at protein level).

The catalysed reaction is 4 Fe(2+) + O2 + 4 H(+) = 4 Fe(3+) + 2 H2O. Its function is as follows. Stores iron in a soluble, non-toxic, readily available form. Important for iron homeostasis. Has ferroxidase activity. Iron is taken up in the ferrous form and deposited as ferric hydroxides after oxidation. This is Ferritin, middle subunit from Trematomus newnesi (Dusky notothen).